We begin with the raw amino-acid sequence, 571 residues long: MYYMLIGFIIVVIAVIGAGYILKRKHYQRINELEEKKIKLRERPVIDELSKVKKLKLTGQTEALFESWRSSWDEIETRLFPDLEEVLLEAEMNTDRYKFRSATHAENDIEQMLVVIEKQMDQILGGLKELLISEEKNAKESRATKEKFAELRREVLTRGFKLGETLPYIETKLSELSESLNSYDSLTDQGDHLEAREIVIVVQKEMQVIEAQMERIPSLLHETDTILPEEMTKLRAGYEEMVRKGYYLAQMELDKEISRMKNQIDKMKKNVINLDLDEAEQGVEELHNEIDLFYDTLEHEAEARHFVKENHSPTSDKLQRQNAVSDALAEQITEVKQTYHVAEDDLAVYLKTSAKLSEAKENFEQLTALIASGEIAYSAAQDTLKEIDAALITISTEQDKFAEELRSLRKDELEARDDAERMRRAIITLDRKMERERLPGLPEEYLSLREHMGESIDALEKRLEEKPLNMKAVSQDWRIAEEDLTHLTEKAEEMMENVRLVEHVIQYANRYRLRNKELADELVQAENHFYNDYQYKKALEIAVTALEKVETGAFKKVEKAYESKVSVDDIE.

Residues 1 to 3 (MYY) are Extracellular-facing. The helical transmembrane segment at 4–22 (MLIGFIIVVIAVIGAGYIL) threads the bilayer. Residues 23–571 (KRKHYQRINE…ESKVSVDDIE (549 aa)) lie on the Cytoplasmic side of the membrane. Coiled coils occupy residues 248–298 (LAQM…DTLE), 326–374 (DALA…ASGE), 400–437 (KFAEELRSLRKDELEARDDAERMRRAIITLDRKMERER), and 478–529 (RIAE…ENHF).

This sequence belongs to the EzrA family.

It localises to the cell membrane. Functionally, negative regulator of FtsZ ring formation; modulates the frequency and position of FtsZ ring formation. Inhibits FtsZ ring formation at polar sites. Interacts either with FtsZ or with one of its binding partners to promote depolymerization. In Listeria monocytogenes serovar 1/2a (strain ATCC BAA-679 / EGD-e), this protein is Septation ring formation regulator EzrA.